We begin with the raw amino-acid sequence, 336 residues long: UDP-galactose transporter 1 (336 aa).

The next 9 helical transmembrane spans lie at 11–31 (LAILQWWGFNVTVIIMNKWIF), 38–58 (FPLSVSCVHFICSSIGAYIVI), 83–103 (FVFCINIVLGNVSLRYIPVSF), 131–151 (IWASLVPIVGGILLTSVTELS), 154–174 (MFGFCAALFGCLATSTKTILA), 193–213 (APFATMILGIPALLLEGSGIL), 227–247 (IIILSSGVLAFCLNFSIFYVI), 254–274 (TFNVAGNLKVAVAVMVSWLIF), and 278–298 (ISYMNAVGCGITLVGCTFYGY).

It belongs to the TPT transporter family. TPT (TC 2.A.7.9) subfamily.

It is found in the membrane. Its function is as follows. Nucleotide sugar transporter that specifically transports UDP-galactose. The chain is UDP-galactose transporter 1 from Arabidopsis thaliana (Mouse-ear cress).